Here is a 100-residue protein sequence, read N- to C-terminus: Small ribosomal subunit protein uS14 (100 aa).

The protein belongs to the universal ribosomal protein uS14 family. Part of the 30S ribosomal subunit. Contacts proteins S3 and S10.

In terms of biological role, binds 16S rRNA, required for the assembly of 30S particles and may also be responsible for determining the conformation of the 16S rRNA at the A site. This is Small ribosomal subunit protein uS14 from Trichormus variabilis (strain ATCC 29413 / PCC 7937) (Anabaena variabilis).